The primary structure comprises 62 residues: Protein translocase subunit SecE (62 aa).

A helical membrane pass occupies residues 40–60; it reads LLVLAVVGVLAYIIQLALTLI.

The protein belongs to the SecE/SEC61-gamma family. Component of the Sec protein translocase complex. Heterotrimer consisting of SecY (alpha), SecG (beta) and SecE (gamma) subunits. The heterotrimers can form oligomers, although 1 heterotrimer is thought to be able to translocate proteins. Interacts with the ribosome. May interact with SecDF, and other proteins may be involved.

It is found in the cell membrane. In terms of biological role, essential subunit of the Sec protein translocation channel SecYEG. Clamps together the 2 halves of SecY. May contact the channel plug during translocation. This Saccharolobus solfataricus (strain ATCC 35092 / DSM 1617 / JCM 11322 / P2) (Sulfolobus solfataricus) protein is Protein translocase subunit SecE.